Here is a 178-residue protein sequence, read N- to C-terminus: MTKKEQALIEQYAKSLVQVCQERDTLEALQADVLAILEVFKATNLAKTLSSLAVPRAKRLELVRQLQGDNIVYLNNLLEVMLQNEREAYLYQVLLRVLSELASVSNQYDVTVTSAVPLSEEQKQRVRTVVSKRLAVKTGRLIEKVDPSLIGGFMISVNNKVIDTSIRRQLQAFKMNLK.

The protein belongs to the ATPase delta chain family. As to quaternary structure, F-type ATPases have 2 components, F(1) - the catalytic core - and F(0) - the membrane proton channel. F(1) has five subunits: alpha(3), beta(3), gamma(1), delta(1), epsilon(1). F(0) has three main subunits: a(1), b(2) and c(10-14). The alpha and beta chains form an alternating ring which encloses part of the gamma chain. F(1) is attached to F(0) by a central stalk formed by the gamma and epsilon chains, while a peripheral stalk is formed by the delta and b chains.

Its subcellular location is the cell membrane. F(1)F(0) ATP synthase produces ATP from ADP in the presence of a proton or sodium gradient. F-type ATPases consist of two structural domains, F(1) containing the extramembraneous catalytic core and F(0) containing the membrane proton channel, linked together by a central stalk and a peripheral stalk. During catalysis, ATP synthesis in the catalytic domain of F(1) is coupled via a rotary mechanism of the central stalk subunits to proton translocation. Functionally, this protein is part of the stalk that links CF(0) to CF(1). It either transmits conformational changes from CF(0) to CF(1) or is implicated in proton conduction. The protein is ATP synthase subunit delta of Streptococcus equi subsp. zooepidemicus (strain H70).